Here is a 247-residue protein sequence, read N- to C-terminus: ATP synthase subunit a, chloroplastic (247 aa).

The next 5 membrane-spanning stretches (helical) occupy residues 38–58 (QVLI…IIAV), 95–115 (VPFI…GALL), 133–153 (DINT…YAGL), 199–219 (LVVV…VMFL), and 220–240 (GLFT…AYIG).

It belongs to the ATPase A chain family. F-type ATPases have 2 components, CF(1) - the catalytic core - and CF(0) - the membrane proton channel. CF(1) has five subunits: alpha(3), beta(3), gamma(1), delta(1), epsilon(1). CF(0) has four main subunits: a, b, b' and c.

It localises to the plastid. The protein localises to the chloroplast thylakoid membrane. In terms of biological role, key component of the proton channel; it plays a direct role in the translocation of protons across the membrane. This Phalaenopsis aphrodite subsp. formosana (Moth orchid) protein is ATP synthase subunit a, chloroplastic.